Here is a 187-residue protein sequence, read N- to C-terminus: Ribosome-recycling factor (187 aa).

This sequence belongs to the RRF family.

The protein localises to the cytoplasm. Its function is as follows. Responsible for the release of ribosomes from messenger RNA at the termination of protein biosynthesis. May increase the efficiency of translation by recycling ribosomes from one round of translation to another. This chain is Ribosome-recycling factor, found in Ligilactobacillus salivarius (strain UCC118) (Lactobacillus salivarius).